The primary structure comprises 739 residues: MSEGISLSAEFIDRVKASVKPHWGKLGWVTYKRTYARWLPEKGRSENWDETVKRVVEGNINLDPRLQDSPSLELKQSLTEEAERLYKLIYGLGATPSGRNLWISGTDYQRRTGDSLNNCWFVAIRPQKYGDSKIVPSYLGKQEKAVSMPFSFLFDELMKGGGVGFSVARSNISQIPRVDFAIDLQVVVDESSESYDASVKVGAVGKNELVQDADSIYYRLPDTREGWVLANALLIDLHFAQTNPDRKQKLILDLSDIRPYGAEIHGFGGTASGPMPLISMLLDINEVLNNKAGGRLTSVDAADICNLIGKAVVAGNVRRSAELALGSNDDQDFISMKQDQEKLMHHRWASNNSVAVDSAFSGYQPIAAGIRENGEPGIVNLDLSKNYGRIVDGYQAGIDGDVEGTNPCGEISLANGEPCNLFEVFPLIAEEQGWDLQEVFALAARYAKRVTFSPYDWEISREIIQKNRRIGISMSGIQDWLLTRLGNRVVTGFKDDFDPETHEAIKVPVYDKRAIKMVDQLYKAVVKADQDYSKTLGCNESIKHTTVKPSGTVAKLAGASEGMHFHYGAYLIQRIRFQNSDPLLPALKACGYRTEADIYTENTTCVEFPVKAVGADNPNFASAGTVSIAEQFATQAFLQTYWSDNAVSCTITFQDSEGDQVESLLRQYRFIIKSTSLLPYFGGSLQQAPKEPIDKETYEKRSQEITGNVEEVFSQLNSDVKDLELVDQTDCEGGACPIK.

A disulfide bridge connects residues Cys119 and Cys419. An effector region-1 region spans residues 147-158 (SMPFSFLFDELM). The segment at 168 to 313 (ARSNISQIPR…ICNLIGKAVV (146 aa)) is effector region-2. Catalysis depends on residues Cys408 and Glu410. The interval 565–626 (FHYGAYLIQR…NPNFASAGTV (62 aa)) is adenosylcobalamin-binding-1. The interval 685 to 724 (LQQAPKEPIDKETYEKRSQEITGNVEEVFSQLNSDVKDLE) is adenosylcobalamin-binding-2.

The protein belongs to the class II ribonucleoside-triphosphate reductase family. Monomer. Adenosylcob(III)alamin is required as a cofactor.

The catalysed reaction is a 2'-deoxyribonucleoside 5'-triphosphate + [thioredoxin]-disulfide + H2O = a ribonucleoside 5'-triphosphate + [thioredoxin]-dithiol. Its activity is regulated as follows. Allosterically regulated by ATP and dNTP. The sequence is that of Adenosylcobalamin-dependent ribonucleoside-triphosphate reductase (rtpR) from Lactobacillus delbrueckii subsp. bulgaricus (strain ATCC 11842 / DSM 20081 / BCRC 10696 / JCM 1002 / NBRC 13953 / NCIMB 11778 / NCTC 12712 / WDCM 00102 / Lb 14).